The chain runs to 198 residues: Elongation factor Ts (198 aa).

The tract at residues threonine 81–valine 84 is involved in Mg(2+) ion dislocation from EF-Tu.

It belongs to the EF-Ts family.

It is found in the cytoplasm. Associates with the EF-Tu.GDP complex and induces the exchange of GDP to GTP. It remains bound to the aminoacyl-tRNA.EF-Tu.GTP complex up to the GTP hydrolysis stage on the ribosome. This is Elongation factor Ts from Dictyoglomus thermophilum (strain ATCC 35947 / DSM 3960 / H-6-12).